Consider the following 600-residue polypeptide: Proline--tRNA ligase (600 aa).

This sequence belongs to the class-II aminoacyl-tRNA synthetase family. ProS type 1 subfamily. As to quaternary structure, homodimer.

It localises to the cytoplasm. It carries out the reaction tRNA(Pro) + L-proline + ATP = L-prolyl-tRNA(Pro) + AMP + diphosphate. Its function is as follows. Catalyzes the attachment of proline to tRNA(Pro) in a two-step reaction: proline is first activated by ATP to form Pro-AMP and then transferred to the acceptor end of tRNA(Pro). As ProRS can inadvertently accommodate and process non-cognate amino acids such as alanine and cysteine, to avoid such errors it has two additional distinct editing activities against alanine. One activity is designated as 'pretransfer' editing and involves the tRNA(Pro)-independent hydrolysis of activated Ala-AMP. The other activity is designated 'posttransfer' editing and involves deacylation of mischarged Ala-tRNA(Pro). The misacylated Cys-tRNA(Pro) is not edited by ProRS. This Synechococcus sp. (strain ATCC 27144 / PCC 6301 / SAUG 1402/1) (Anacystis nidulans) protein is Proline--tRNA ligase.